The following is a 486-amino-acid chain: Cobyric acid synthase (486 aa).

The 189-residue stretch at 251–439 (RAKIVVPMLS…VHGLFERGEA (189 aa)) folds into the GATase cobBQ-type domain. Catalysis depends on C333, which acts as the Nucleophile. H431 is a catalytic residue.

Belongs to the CobB/CobQ family. CobQ subfamily.

It functions in the pathway cofactor biosynthesis; adenosylcobalamin biosynthesis. Its function is as follows. Catalyzes amidations at positions B, D, E, and G on adenosylcobyrinic A,C-diamide. NH(2) groups are provided by glutamine, and one molecule of ATP is hydrogenolyzed for each amidation. The polypeptide is Cobyric acid synthase (Caulobacter sp. (strain K31)).